The primary structure comprises 150 residues: Retinal rod rhodopsin-sensitive cGMP 3',5'-cyclic phosphodiesterase subunit delta (150 aa).

Residues 144–150 (RVRLFYV) are required for association with membranes.

The protein belongs to the PDE6D/unc-119 family. In terms of assembly, interacts with the prenylated catalytic subunits of PDE6, an oligomer composed of two catalytic chains (PDE6A and PDE6B) and two inhibitory chains (gamma); has no effect on enzyme activity but promotes the release of the prenylated enzyme from cell membrane. Interacts with prenylated GRK1 and GRK7. Interacts with prenylated Ras family members, including RAP2A and RAP2C. Interacts with prenylated RHEB and NRAS. Interacts with prenylated HRAS and KRAS. Interacts with RAB13 (prenylated form); dissociates RAB13 from membranes. Interacts with prenylated INPP5E. Interacts with RAB28 (prenylated form); the interaction promotes RAB28 delivery to the photoreceptor outer segments. Interacts with RPGR. Interacts with ARL2. Interacts with ARL3; the interaction occurs specifically with the GTP-bound form of ARL3. Interaction with ARL2 and ARL3 promotes release of farnesylated cargo proteins. As to expression, widely expressed. Detected in various tissues including spleen, prostate gland, testis, ovary, small intestine, colon, retina, and peripheral blood.

The protein localises to the cytoplasm. The protein resides in the cytosol. It localises to the cytoplasmic vesicle membrane. It is found in the cytoskeleton. Its subcellular location is the cilium basal body. Promotes the release of prenylated target proteins from cellular membranes. Modulates the activity of prenylated or palmitoylated Ras family members by regulating their subcellular location. Required for normal ciliary targeting of farnesylated target proteins, such as INPP5E. Required for RAB28 localization to the cone cell outer segments in the retina. Modulates the subcellular location of target proteins by acting as a GTP specific dissociation inhibitor (GDI). Increases the affinity of ARL3 for GTP by several orders of magnitude. Stabilizes ARL3-GTP by decreasing the nucleotide dissociation rate. This Homo sapiens (Human) protein is Retinal rod rhodopsin-sensitive cGMP 3',5'-cyclic phosphodiesterase subunit delta (PDE6D).